The primary structure comprises 240 residues: 1-(5-phosphoribosyl)-5-[(5-phosphoribosylamino)methylideneamino] imidazole-4-carboxamide isomerase (240 aa).

Asp8 (proton acceptor) is an active-site residue. Asp129 serves as the catalytic Proton donor.

It belongs to the HisA/HisF family.

Its subcellular location is the cytoplasm. The enzyme catalyses 1-(5-phospho-beta-D-ribosyl)-5-[(5-phospho-beta-D-ribosylamino)methylideneamino]imidazole-4-carboxamide = 5-[(5-phospho-1-deoxy-D-ribulos-1-ylimino)methylamino]-1-(5-phospho-beta-D-ribosyl)imidazole-4-carboxamide. Its pathway is amino-acid biosynthesis; L-histidine biosynthesis; L-histidine from 5-phospho-alpha-D-ribose 1-diphosphate: step 4/9. This Herpetosiphon aurantiacus (strain ATCC 23779 / DSM 785 / 114-95) protein is 1-(5-phosphoribosyl)-5-[(5-phosphoribosylamino)methylideneamino] imidazole-4-carboxamide isomerase.